The chain runs to 112 residues: Nitrogen regulatory protein P-II (112 aa).

At Tyr-51 the chain carries O-UMP-tyrosine.

This sequence belongs to the P(II) protein family. Homotrimer.

Its function is as follows. In nitrogen-limiting conditions, when the ratio of Gln to 2-ketoglutarate decreases, P-II is uridylylated to P-II-UMP. P-II-UMP allows the deadenylation of glutamine synthetase (GS), thus activating the enzyme. Conversely, in nitrogen excess P-II is deuridylated and promotes the adenylation of GS. P-II indirectly controls the transcription of the GS gene (glnA). P-II prevents NR-II-catalyzed conversion of NR-I to NR-I-phosphate, the transcriptional activator of glnA. When P-II is uridylylated to P-II-UMP, these events are reversed. The polypeptide is Nitrogen regulatory protein P-II (glnB) (Rhizobium etli (strain ATCC 51251 / DSM 11541 / JCM 21823 / NBRC 15573 / CFN 42)).